The chain runs to 239 residues: Guanylate kinase (239 aa).

Positions 55–235 (GRIFVITGPS…TLAELQAILL (181 aa)) constitute a Guanylate kinase-like domain. 62–69 (GPSGVGKS) is a binding site for ATP.

Belongs to the guanylate kinase family.

The protein localises to the cytoplasm. The enzyme catalyses GMP + ATP = GDP + ADP. Functionally, essential for recycling GMP and indirectly, cGMP. This Mycoplasma pneumoniae (strain ATCC 29342 / M129 / Subtype 1) (Mycoplasmoides pneumoniae) protein is Guanylate kinase (gmk).